The following is a 177-amino-acid chain: MTKEYATLAGGCFWCMVKPFTSYPGIKSVVSGYSGGHVDNPTYEQVCTNKTGHVEAVQITFDPEVTSFENILDIYFKTFDPTDDQGQFFDRGESYQPVIFYHDEHQKKAAEFKKQQLNEQGIFKKPVITPIKPYKNFYPAEDYHQDYYKKNPVHYYQYQRGSGRKAFIESHWGNQNA.

Residue C12 is part of the active site.

This sequence belongs to the MsrA Met sulfoxide reductase family.

It carries out the reaction L-methionyl-[protein] + [thioredoxin]-disulfide + H2O = L-methionyl-(S)-S-oxide-[protein] + [thioredoxin]-dithiol. It catalyses the reaction [thioredoxin]-disulfide + L-methionine + H2O = L-methionine (S)-S-oxide + [thioredoxin]-dithiol. Has an important function as a repair enzyme for proteins that have been inactivated by oxidation. Catalyzes the reversible oxidation-reduction of methionine sulfoxide in proteins to methionine. The polypeptide is Peptide methionine sulfoxide reductase MsrA 2 (msrA2) (Staphylococcus aureus (strain Mu50 / ATCC 700699)).